A 310-amino-acid polypeptide reads, in one-letter code: MEGNKTWITDITLPRFQVGPALEILLCGLFSAFYTLTLLGNGVIFGIICLDCKLHTPMYFFLSHLAIVDISYASNYVPKMLTNLMNQESTISFFPCIMQTFLYLAFAHVECLILVVMSYDRYADICHPLRYNSLMSWRVCTVLAVASWVFSFLLALVPLVLILSLPFCGPHEINHFFCEILSVLKLACADTWLNQVVIFAACVFILVGPLCLVLVSYLRILAAILRIQSGEGRRKAFSTCSSHLCVVGLFFGSAIVTYMAPKSRHPEEQQKVLSLFYSLFNPMLNPLIYSLRNAEVKGALRRALRKERLT.

Topologically, residues 1–24 (MEGNKTWITDITLPRFQVGPALEI) are extracellular. Asparagine 4 carries an N-linked (GlcNAc...) asparagine glycan. A helical membrane pass occupies residues 25 to 48 (LLCGLFSAFYTLTLLGNGVIFGII). Residues 49-56 (CLDCKLHT) lie on the Cytoplasmic side of the membrane. Residues 57–78 (PMYFFLSHLAIVDISYASNYVP) traverse the membrane as a helical segment. At 79–99 (KMLTNLMNQESTISFFPCIMQ) the chain is on the extracellular side. A disulfide bond links cysteine 96 and cysteine 188. A helical transmembrane segment spans residues 100–119 (TFLYLAFAHVECLILVVMSY). The Cytoplasmic segment spans residues 120 to 138 (DRYADICHPLRYNSLMSWR). A helical transmembrane segment spans residues 139–157 (VCTVLAVASWVFSFLLALV). Over 158-194 (PLVLILSLPFCGPHEINHFFCEILSVLKLACADTWLN) the chain is Extracellular. Residues 195–218 (QVVIFAACVFILVGPLCLVLVSYL) traverse the membrane as a helical segment. Topologically, residues 219-235 (RILAAILRIQSGEGRRK) are cytoplasmic. Residues 236 to 258 (AFSTCSSHLCVVGLFFGSAIVTY) form a helical membrane-spanning segment. The Extracellular segment spans residues 259 to 271 (MAPKSRHPEEQQK). A helical membrane pass occupies residues 272-291 (VLSLFYSLFNPMLNPLIYSL). The Cytoplasmic portion of the chain corresponds to 292–310 (RNAEVKGALRRALRKERLT).

The protein belongs to the G-protein coupled receptor 1 family.

Its subcellular location is the cell membrane. Its function is as follows. Odorant receptor. The polypeptide is Olfactory receptor 2A14 (OR2A14) (Homo sapiens (Human)).